Here is a 238-residue protein sequence, read N- to C-terminus: tRNA (guanine-N(7)-)-methyltransferase (238 aa).

Residues Glu-68, Glu-93, Asp-120, and Asp-143 each coordinate S-adenosyl-L-methionine. Residue Asp-143 is part of the active site. Substrate contacts are provided by residues Lys-147, Asp-179, and Thr-216 to Glu-219.

The protein belongs to the class I-like SAM-binding methyltransferase superfamily. TrmB family. In terms of assembly, monomer.

It catalyses the reaction guanosine(46) in tRNA + S-adenosyl-L-methionine = N(7)-methylguanosine(46) in tRNA + S-adenosyl-L-homocysteine. The protein operates within tRNA modification; N(7)-methylguanine-tRNA biosynthesis. In terms of biological role, catalyzes the formation of N(7)-methylguanine at position 46 (m7G46) in tRNA. In Edwardsiella ictaluri (strain 93-146), this protein is tRNA (guanine-N(7)-)-methyltransferase.